A 152-amino-acid polypeptide reads, in one-letter code: Transcriptional regulator MraZ (152 aa).

SpoVT-AbrB domains lie at 5 to 52 and 81 to 124; these read ASAI…PLQE and AHEC…DEAA.

This sequence belongs to the MraZ family. In terms of assembly, forms oligomers.

The protein localises to the cytoplasm. It is found in the nucleoid. This chain is Transcriptional regulator MraZ, found in Shewanella denitrificans (strain OS217 / ATCC BAA-1090 / DSM 15013).